Reading from the N-terminus, the 1615-residue chain is Low-density lipoprotein receptor-related protein 5 (1615 aa).

The N-terminal stretch at 1-31 is a signal peptide; that stretch reads MEAAPPGPPWPLLLLLLLLLALCGCPAPAAA. Positions 32-288 are beta-propeller 1; sequence SPLLLFANRR…YSPMDIQVLS (257 aa). The Extracellular portion of the chain corresponds to 32–1384; the sequence is SPLLLFANRR…PPSDDSPAHS (1353 aa). LDL-receptor class B repeat units follow at residues 75 to 119, 120 to 162, 163 to 206, 207 to 247, and 248 to 290; these read GAVY…DWVG, KKLY…DPAH, GYMY…DLEE, QKLY…TLSG, and DTLY…LSQE. The YWTD 1 repeat unit spans residues 78–81; sequence YWTD. Asn-93 carries an N-linked (GlcNAc...) asparagine glycan. The stretch at 123 to 126 is one YWTD 2 repeat; sequence YWTD. Asn-138 carries N-linked (GlcNAc...) asparagine glycosylation. The stretch at 166-169 is one YWTD 3 repeat; the sequence is YWTD. A YWTD 4 repeat occupies 251–254; sequence YWTD. The region spanning 295–337 is the EGF-like 1 domain; sequence FHTRCEEDNGGCSHLCLLSPSEPFYTCACPTGVQLQDNGRTCK. 3 cysteine pairs are disulfide-bonded: Cys-299/Cys-310, Cys-306/Cys-321, and Cys-323/Cys-336. A beta-propeller 2 region spans residues 341–602; that stretch reads EEVLLLARRT…AVNVAKVVGT (262 aa). 5 LDL-receptor class B repeats span residues 385-427, 428-470, 471-514, 515-557, and 558-600; these read GYVY…DWVA, RNLY…HPVM, GLMY…DLQE, GKLY…LGDF, and IYWT…AKVV. YWTD repeat units lie at residues 388–391 and 431–434; these read YWTD. N-linked (GlcNAc...) asparagine glycosylation is present at Asn-446. The stretch at 474 to 477 is one YWTD 7 repeat; sequence YWTD. N-linked (GlcNAc...) asparagine glycosylation occurs at Asn-499. The stretch at 559-562 is one YWTD 8 repeat; sequence YWTD. Residues 601–641 form the EGF-like 2 domain; that stretch reads GTNPCADRNGGCSHLCFFTPHATRCGCPIGLELLSDMKTCI. Disulfide bonds link Cys-605/Cys-616, Cys-612/Cys-625, and Cys-627/Cys-640. Residues 644-903 are beta-propeller 3; it reads EAFLVFTSRA…VFHSSRQDGL (260 aa). 5 LDL-receptor class B repeats span residues 687-729, 730-772, 773-815, 816-855, and 856-898; these read NHIY…DWMG, KNLY…DPTK, GYIY…DYAD, QRLYWTDLDTNMIESSNMLGQERVVIADDLPHPFGLTQYS, and DYIY…FHSS. One copy of the YWTD 9 repeat lies at 690–693; the sequence is YWTD. A glycan (N-linked (GlcNAc...) asparagine) is linked at Asn-705. YWTD repeat units follow at residues 819-822 and 859-862; these read YWTD. Asn-878 carries an N-linked (GlcNAc...) asparagine glycan. The 41-residue stretch at 902–942 folds into the EGF-like 3 domain; sequence GLNDCMHNNGQCGQLCLAIPGGHRCGCASHYTLDPSSRNCS. Intrachain disulfides connect Cys-906–Cys-917, Cys-913–Cys-926, and Cys-928–Cys-941. Residues 945–1212 form a beta-propeller 4 region; the sequence is TTFLLFSQKS…AVEEVSLEEF (268 aa). LDL-receptor class B repeat units follow at residues 989-1035, 1036-1078, 1079-1123, 1124-1164, and 1165-1207; these read KFIY…DIYS, RTLF…NAER, GYLY…DNTL, GKLF…TILG, and KHLY…VEEV. Residues 1213–1254 enclose the EGF-like 4 domain; that stretch reads SAHPCARDNGGCSHICIAKGDGTPRCSCPVHLVLLQNLLTCG. 12 disulfides stabilise this stretch: Cys-1217/Cys-1228, Cys-1224/Cys-1238, Cys-1240/Cys-1253, Cys-1259/Cys-1273, Cys-1266/Cys-1286, Cys-1280/Cys-1295, Cys-1298/Cys-1310, Cys-1305/Cys-1323, Cys-1317/Cys-1332, Cys-1336/Cys-1348, Cys-1343/Cys-1361, and Cys-1355/Cys-1370. LDL-receptor class A domains are found at residues 1258 to 1296, 1297 to 1333, and 1335 to 1371; these read TCSPDQFACATGEIDCIPGAWRCDGFPECDDQSDEEGCP, VCSAAQFPCARGQCVDLRLRCDGEADCQDRSDEADCD, and ICLPNQFRCASGQCVLIKQQCDSFPDCIDGSDELMCE. The helical transmembrane segment at 1385-1407 threads the bilayer; that stretch reads SAIGPVIGIILSLFVMGGVYFVC. At 1408 to 1615 the chain is on the cytoplasmic side; the sequence is QRVVCQRYAG…PPPSPCTDSS (208 aa). Positions 1475–1501 are disordered; that stretch reads RNHVTGASSSSSSSTKATLYPPILNPP. Positions 1500 to 1506 match the PPPSP motif A motif; it reads PPPSPAT. The short motif at 1538–1545 is the PPPSP motif B element; that stretch reads PPTTPCST. The interval 1568–1615 is disordered; sequence SDSDPYPPPPTPHSQYLSAEDSCPPSPATERSYFHLFPPPPSPCTDSS. The PPPSP motif C motif lies at 1574 to 1581; it reads PPPPTPHS. The short motif at 1591–1596 is the PPPSP motif D element; the sequence is PPSPAT. Residues 1604-1615 are compositionally biased toward pro residues; sequence FPPPPSPCTDSS. Residues 1605 to 1612 carry the PPPSP motif E motif; that stretch reads PPPPSPCT.

The protein belongs to the LDLR family. In terms of assembly, homodimer; disulfide-linked. Forms phosphorylated oligomer aggregates on Wnt-signaling. Component of a Wnt-signaling complex that contains a WNT protein, a FZD protein and LRP5 or LRP6. Interacts with FZD8; the interaction is formed on WNT-binding and signaling. Interacts (via the phosphorylated PPPSP motif domains) with AXIN1; the interaction prevents inhibition of beta-catenin phosphorylation and signaling and is enhanced in the presence of GSK3B and WNT1 or WNT3A. Interacts (via beta-propeller regions 3 and 4) with DKK1; the interaction, enhanced by MESD and/or KREMEN, inhibits beta-catenin signaling by preventing GSK3-mediated phosphorylation of the PPPSP motifs and subsequent, AXIN1 binding. Interacts with MESD; the interaction prevents the formation of LRP5 aggregates, targets LRP5 to the plasma membrane and, when complexed with KREMEN2, increases DKK1 binding. Interacts with CSNK1E. Interacts with SOST; the interaction antagonizes canonical Wnt signaling. Interacts with APCDD1. Interacts with CAPRIN2. In terms of processing, phosphorylation of cytoplasmic PPPSP motifs regulates the signal transduction of the Wnt signaling pathway through acting as a docking site for AXIN1. Widely expressed, with the highest level of expression in the liver and in aorta.

It is found in the membrane. The protein resides in the endoplasmic reticulum. In terms of biological role, acts as a coreceptor with members of the frizzled family of seven-transmembrane spanning receptors to transduce signal by Wnt proteins. Activates the canonical Wnt signaling pathway that controls cell fate determination and self-renewal during embryonic development and adult tissue regeneration. In particular, may play an important role in the development of the posterior patterning of the epiblast during gastrulation. During bone development, regulates osteoblast proliferation and differentiation thus determining bone mass. Mechanistically, the formation of the signaling complex between Wnt ligand, frizzled receptor and LRP5 coreceptor promotes the recruitment of AXIN1 to LRP5, stabilizing beta-catenin/CTNNB1 and activating TCF/LEF-mediated transcriptional programs. Acts as a coreceptor for non-Wnt proteins, such as norrin/NDP. Binding of norrin/NDP to frizzled 4/FZD4-LRP5 receptor complex triggers beta-catenin/CTNNB1-dependent signaling known to be required for retinal vascular development. Plays a role in controlling postnatal vascular regression in retina via macrophage-induced endothelial cell apoptosis. The sequence is that of Low-density lipoprotein receptor-related protein 5 from Homo sapiens (Human).